The following is a 310-amino-acid chain: Methionyl-tRNA formyltransferase (310 aa).

A (6S)-5,6,7,8-tetrahydrofolate-binding site is contributed by 110 to 113; it reads SLLP.

The protein belongs to the Fmt family.

It catalyses the reaction L-methionyl-tRNA(fMet) + (6R)-10-formyltetrahydrofolate = N-formyl-L-methionyl-tRNA(fMet) + (6S)-5,6,7,8-tetrahydrofolate + H(+). Attaches a formyl group to the free amino group of methionyl-tRNA(fMet). The formyl group appears to play a dual role in the initiator identity of N-formylmethionyl-tRNA by promoting its recognition by IF2 and preventing the misappropriation of this tRNA by the elongation apparatus. The polypeptide is Methionyl-tRNA formyltransferase (Streptomyces griseus subsp. griseus (strain JCM 4626 / CBS 651.72 / NBRC 13350 / KCC S-0626 / ISP 5235)).